Reading from the N-terminus, the 1161-residue chain is Nuclear pore complex-interacting protein family member B11 (1161 aa).

The chain crosses the membrane as a helical span at residues 63–87; it reads IIIAFPTSYKVVITLWIVYLWVSLL. 2 disordered regions span residues 278–580 and 892–1161; these read ADDN…DDNI and SADD…RRLS. Pro residues predominate over residues 311-321; that stretch reads PLPPSAPPSAP. Basic and acidic residues-rich tracts occupy residues 368-378, 410-420, 452-462, 494-504, 536-546, 918-928, 960-970, 1002-1012, and 1044-1054; these read DNIKTTAERLR, DNIKTPAEHLR, DNIKTPAERLR, and DNIKTTAEHLR.

This sequence belongs to the NPIP family.

The protein localises to the membrane. The polypeptide is Nuclear pore complex-interacting protein family member B11 (NPIPB11) (Homo sapiens (Human)).